Reading from the N-terminus, the 260-residue chain is Putative ATP-binding protein BruAb2_1123 (260 aa).

Residues 5 to 228 enclose the ABC transporter domain; sequence ISFNNVVMRY…DLPYPRTEAI (224 aa). 37-44 provides a ligand contact to ATP; the sequence is GPSGCGKS.

It belongs to the ABC transporter superfamily. The complex is composed of two ATP-binding proteins (BruAb2_1123), two transmembrane proteins (BruAb2_1124) and a solute-binding protein (BruAb2_1122).

It localises to the cell inner membrane. Probably part of an ABC transporter complex. Probably Responsible for energy coupling to the transport system. This Brucella abortus biovar 1 (strain 9-941) protein is Putative ATP-binding protein BruAb2_1123.